The chain runs to 54 residues: Relaxin (54 aa).

A Pyrrolidone carboxylic acid modification is found at glutamine 1. Intrachain disulfides connect cysteine 13–cysteine 41, cysteine 25–cysteine 54, and cysteine 40–cysteine 45.

The protein belongs to the insulin family. As to quaternary structure, heterodimer of a B chain and an A chain linked by two disulfide bonds.

The protein resides in the secreted. The function of relaxin in an oviparous species is not yet known. The protein is Relaxin of Squalus acanthias (Spiny dogfish).